An 80-amino-acid chain; its full sequence is RNA-binding protein Hfq (80 aa).

The Sm domain occupies 10–69 (DPFLNALRKEHVPVSIYLVNGIKLQGNIESFDQYVVLLRNTVTQMVYKHAISTVVPARPV).

Belongs to the Hfq family. As to quaternary structure, homohexamer.

Functionally, RNA chaperone that binds small regulatory RNA (sRNAs) and mRNAs to facilitate mRNA translational regulation in response to envelope stress, environmental stress and changes in metabolite concentrations. Also binds with high specificity to tRNAs. This chain is RNA-binding protein Hfq, found in Burkholderia ambifaria (strain ATCC BAA-244 / DSM 16087 / CCUG 44356 / LMG 19182 / AMMD) (Burkholderia cepacia (strain AMMD)).